We begin with the raw amino-acid sequence, 723 residues long: Phenylalanine ammonia-lyase (723 aa).

Catalysis depends on Tyr77, which acts as the Proton donor/acceptor. The segment at residues 182-184 (ASG) is a cross-link (5-imidazolinone (Ala-Gly)). At Ser183 the chain carries 2,3-didehydroalanine (Ser). Residues Asn241, Gln336, Arg342, Asn372, Lys443, Glu471, and Asn474 each contribute to the (E)-cinnamate site.

The protein belongs to the PAL/histidase family. Post-translationally, contains an active site 4-methylidene-imidazol-5-one (MIO), which is formed autocatalytically by cyclization and dehydration of residues Ala-Ser-Gly.

It localises to the cytoplasm. It catalyses the reaction L-phenylalanine = (E)-cinnamate + NH4(+). The protein operates within secondary metabolite biosynthesis. Its pathway is phenylpropanoid metabolism; trans-cinnamate biosynthesis; trans-cinnamate from L-phenylalanine: step 1/1. In terms of biological role, phenylalanine ammonia-lyase; part of the gene cluster that mediates the biosynthesis of squalestatin S1 (SQS1, also known as zaragozic acid A), a heavily oxidized fungal polyketide that offers potent cholesterol lowering activity by targeting squalene synthase (SS). SQS1 is composed of a 2,8-dioxobicyclic[3.2.1]octane-3,4,5-tricarboxyclic acid core that is connected to two lipophilic polyketide arms. These initial steps feature the priming of an unusual benzoic acid starter unit onto the highly reducing polyketide synthase clz14, followed by oxaloacetate extension and product release to generate a tricarboxylic acid containing product. The phenylalanine ammonia lyase (PAL) clz10 and the acyl-CoA ligase clz12 are involved in transforming phenylalanine into benzoyl-CoA. The citrate synthase-like protein clz17 is involved in connecting the C-alpha-carbons of the hexaketide chain and oxaloacetate to afford the tricarboxylic acid unit. The potential hydrolytic enzymes, clz11 and clz13, are in close proximity to pks2 and may participate in product release. On the other side, the tetraketide arm is synthesized by a the squalestatin tetraketide synthase clz2 and enzymatically esterified to the core in the last biosynthetic step, by the acetyltransferase clz6. The biosynthesis of the tetraketide must involve 3 rounds of chain extension. After the first and second rounds methyl-transfer occurs, and in all rounds of extension the ketoreductase and dehydratase are active. The enoyl reductase and C-MeT of clz2 are not active in the final round of extension. The acetyltransferase clz6 appears to have a broad substrate selectivity for its acyl CoA substrate, allowing the in vitro synthesis of novel squalestatins. The biosynthesis of SQS1 requires several oxidative steps likely performed by oxidoreductases clz3, clz15 and clz16. Finally, in support of the identification of the cluster as being responsible for SQS1 production, the cluster contains a gene encoding a putative squalene synthase (SS) clz20, suggesting a likely mechanism for self-resistance. The sequence is that of Phenylalanine ammonia-lyase from Cochliobolus lunatus (Filamentous fungus).